The sequence spans 502 residues: Packaging protein 1 (502 aa).

A disordered region spans residues 99–122 (EAMEGQNPTCSRHESAYPIQSQVS). 226 to 233 (GPTGCGKS) is an ATP binding site. The segment at 495 to 502 (RYYHSKKK) is DNA-binding.

The protein belongs to the adenoviridae packaging protein 1 family. In terms of assembly, homodimer. Part of a genome packaging complex composed of packaging proteins 1, 2 and 3; this complex specifically binds to the packaging sequence on the left end of viral genomic DNA and performs packaging of the viral genome. Interacts with protein 33K.

The protein localises to the virion. The protein resides in the host nucleus. It is found in the host nucleoplasm. It localises to the host nucleolus. In terms of biological role, component of the packaging machinery which encapsidates the viral DNA into preformed capsids and transcriptional activator of the viral major late promoter (MLP). Binds, along with packaging proteins 2 and 3, to the specific packaging sequence on the left end of viral genomic DNA and displays ATPase activity thereby providing the power stroke of the packaging machinery. The activity of packaging protein IVa2 is stimulated by protein 33K which acts as a terminase. May be the protein that pumps DNA into the capsid powered by ATP hydrolysis. Specifically binds to the 5'-CG-3' nucleotides of the repeats making up the packaging sequence. Component of the DEF-A and DEF-B transcription factors that bind downstream elements of the major late promoter (MLP), and stimulate transcription from the MLP after initiation of viral DNA replication. DEF-A is a heterodimer packaging proteins 1 and 2 and DEF-B is a homodimer of packaging protein 1. The protein is Packaging protein 1 of Canis lupus familiaris (Dog).